Reading from the N-terminus, the 421-residue chain is Protein OS-9 homolog (421 aa).

Residues 1–26 form the signal peptide; it reads MWRWSTGVRTMLGYAMCFLALGSALT. In terms of domain architecture, MRH spans 99–220; it reads EEATVGKKLE…LVSIPSLCEL (122 aa). A mannooligosaccharide derivative is bound at residue Trp115. The N-linked (GlcNAc...) asparagine glycan is linked to Asn125. Disulfide bonds link Cys173–Cys206 and Cys188–Cys218. A mannooligosaccharide derivative-binding residues include Arg180, Glu202, and Tyr208. N-linked (GlcNAc...) asparagine glycans are attached at residues Asn271 and Asn332. The span at 375–394 shows a compositional bias: acidic residues; it reads GNSEDYEQQAPEQLDEEEAE. A disordered region spans residues 375–403; it reads GNSEDYEQQAPEQLDEEEAELTSQSDDPA.

It belongs to the OS-9 family. Interacts with missfolded ER lumenal proteins.

Its subcellular location is the endoplasmic reticulum membrane. Functionally, lectin involved in the quality control of the secretory pathway. As a member of the endoplasmic reticulum-associated degradation lumenal (ERAD-L) surveillance system, targets misfolded endoplasmic reticulum lumenal glycoproteins for degradation. The sequence is that of Protein OS-9 homolog (YOS9) from Eremothecium gossypii (strain ATCC 10895 / CBS 109.51 / FGSC 9923 / NRRL Y-1056) (Yeast).